The chain runs to 457 residues: UDP-glycosyltransferase 72C1 (457 aa).

UDP-alpha-D-glucose-binding positions include S272, W343–A344, H361–E369, and Y383–Q386.

Belongs to the UDP-glycosyltransferase family.

This is UDP-glycosyltransferase 72C1 (UGT72C1) from Arabidopsis thaliana (Mouse-ear cress).